A 199-amino-acid polypeptide reads, in one-letter code: Large ribosomal subunit protein bL25 (199 aa).

The protein belongs to the bacterial ribosomal protein bL25 family. CTC subfamily. As to quaternary structure, part of the 50S ribosomal subunit; part of the 5S rRNA/L5/L18/L25 subcomplex. Contacts the 5S rRNA. Binds to the 5S rRNA independently of L5 and L18.

Its function is as follows. This is one of the proteins that binds to the 5S RNA in the ribosome where it forms part of the central protuberance. The polypeptide is Large ribosomal subunit protein bL25 (Chloroherpeton thalassium (strain ATCC 35110 / GB-78)).